The chain runs to 191 residues: Early nodulin-like protein 8 (191 aa).

A signal peptide spans 1 to 22; the sequence is MGVMSLSKTMVVVVLQVMILLG. The 103-residue stretch at 31–133 folds into the Phytocyanin domain; it reads TLYKVGDLDA…YQKLLVSVGT (103 aa). The cysteines at positions 87 and 121 are disulfide-linked. N-linked (GlcNAc...) asparagine glycosylation is found at asparagine 104 and asparagine 108. Serine 165 carries GPI-anchor amidated serine lipidation. The propeptide at 166–191 is removed in mature form; it reads SASSSLISAFSTVAASLACAVVGAIM.

Belongs to the early nodulin-like (ENODL) family. As to expression, mostly expressed in seedlings and roots, and, to a lower extent, in leaves, flowers, stems and seeds.

It localises to the cell membrane. In terms of biological role, may act as a carbohydrate transporter. In Arabidopsis thaliana (Mouse-ear cress), this protein is Early nodulin-like protein 8.